The primary structure comprises 55 residues: Mitochondrial import receptor subunit TOM7 homolog (55 aa).

Over 1–20 (MVKLSKEAKQRLQQLFKGSQ) the chain is Cytoplasmic. The helical transmembrane segment at 21–36 (FAIRWGFIPLVIYLGF) threads the bilayer. Residues 37 to 55 (KRGADPGMPEPTVLSLLWG) lie on the Mitochondrial intermembrane side of the membrane.

This sequence belongs to the Tom7 family. As to quaternary structure, forms part of the preprotein translocase complex of the outer mitochondrial membrane (TOM complex) which consists of at least 7 different proteins (TOMM5, TOMM6, TOMM7, TOMM20, TOMM22, TOMM40 and TOMM70).

Its subcellular location is the mitochondrion outer membrane. Required for assembly and stability of the TOM complex. Positive regulator of PRKN translocation to damaged mitochondria. Acts probably by stabilizing PINK1 on the outer membrane of depolarized mitochondria. The sequence is that of Mitochondrial import receptor subunit TOM7 homolog (TOMM7) from Homo sapiens (Human).